A 239-amino-acid polypeptide reads, in one-letter code: 1-(5-phosphoribosyl)-5-[(5-phosphoribosylamino)methylideneamino] imidazole-4-carboxamide isomerase (239 aa).

Asp9 (proton acceptor) is an active-site residue. Asp131 functions as the Proton donor in the catalytic mechanism.

It belongs to the HisA/HisF family.

Its subcellular location is the cytoplasm. The catalysed reaction is 1-(5-phospho-beta-D-ribosyl)-5-[(5-phospho-beta-D-ribosylamino)methylideneamino]imidazole-4-carboxamide = 5-[(5-phospho-1-deoxy-D-ribulos-1-ylimino)methylamino]-1-(5-phospho-beta-D-ribosyl)imidazole-4-carboxamide. Its pathway is amino-acid biosynthesis; L-histidine biosynthesis; L-histidine from 5-phospho-alpha-D-ribose 1-diphosphate: step 4/9. The protein is 1-(5-phosphoribosyl)-5-[(5-phosphoribosylamino)methylideneamino] imidazole-4-carboxamide isomerase of Bacteroides thetaiotaomicron (strain ATCC 29148 / DSM 2079 / JCM 5827 / CCUG 10774 / NCTC 10582 / VPI-5482 / E50).